A 264-amino-acid polypeptide reads, in one-letter code: Small ribosomal subunit protein uS2 (264 aa).

The protein belongs to the universal ribosomal protein uS2 family.

The sequence is that of Small ribosomal subunit protein uS2 from Latilactobacillus sakei subsp. sakei (strain 23K) (Lactobacillus sakei subsp. sakei).